The sequence spans 207 residues: Outer-membrane lipoprotein LolB (207 aa).

The signal sequence occupies residues 1 to 21 (MPLPDFRLIRLLPLAALVLTA). Cys22 carries the N-palmitoyl cysteine lipid modification. The S-diacylglycerol cysteine moiety is linked to residue Cys22.

Belongs to the LolB family. In terms of assembly, monomer.

Its subcellular location is the cell outer membrane. In terms of biological role, plays a critical role in the incorporation of lipoproteins in the outer membrane after they are released by the LolA protein. In Shigella boydii serotype 18 (strain CDC 3083-94 / BS512), this protein is Outer-membrane lipoprotein LolB.